Here is a 101-residue protein sequence, read N- to C-terminus: Large ribosomal subunit protein uL24 (101 aa).

It belongs to the universal ribosomal protein uL24 family. Part of the 50S ribosomal subunit.

One of two assembly initiator proteins, it binds directly to the 5'-end of the 23S rRNA, where it nucleates assembly of the 50S subunit. Its function is as follows. One of the proteins that surrounds the polypeptide exit tunnel on the outside of the subunit. The polypeptide is Large ribosomal subunit protein uL24 (Borreliella burgdorferi (strain ATCC 35210 / DSM 4680 / CIP 102532 / B31) (Borrelia burgdorferi)).